Here is a 234-residue protein sequence, read N- to C-terminus: 2,3-bisphosphoglycerate-dependent phosphoglycerate mutase (234 aa).

Residues 8–15, 21–22, Arg-60, 87–90, Lys-98, 114–115, and 183–184 each bind substrate; these read RHGESVWN, TG, ERHY, RR, and GN. The Tele-phosphohistidine intermediate role is filled by His-9. The active-site Proton donor/acceptor is the Glu-87.

This sequence belongs to the phosphoglycerate mutase family. BPG-dependent PGAM subfamily. As to quaternary structure, homodimer.

It catalyses the reaction (2R)-2-phosphoglycerate = (2R)-3-phosphoglycerate. The protein operates within carbohydrate degradation; glycolysis; pyruvate from D-glyceraldehyde 3-phosphate: step 3/5. Its function is as follows. Catalyzes the interconversion of 2-phosphoglycerate and 3-phosphoglycerate. The sequence is that of 2,3-bisphosphoglycerate-dependent phosphoglycerate mutase from Geobacter sp. (strain M21).